Reading from the N-terminus, the 543-residue chain is RuBisCO large subunit-binding protein subunit alpha, chloroplastic (543 aa).

The transit peptide at G1 to A2 directs the protein to the chloroplast.

Belongs to the chaperonin (HSP60) family. Oligomer of probably six alpha and six beta subunits.

The protein localises to the plastid. The protein resides in the chloroplast. Its function is as follows. This protein binds RuBisCO small and large subunits and is implicated in the assembly of the enzyme oligomer. In Triticum aestivum (Wheat), this protein is RuBisCO large subunit-binding protein subunit alpha, chloroplastic.